Reading from the N-terminus, the 667-residue chain is Gamma-tubulin complex component 4 (667 aa).

The interval 424 to 446 (DHKADATQPREVPSRETSPREAP) is disordered.

This sequence belongs to the TUBGCP family. Component of the gamma-tubulin ring complex (gTuRC) consisting of TUBGCP2, TUBGCP3, TUBGCP4, TUBGCP5 and TUBGCP6 and gamma-tubulin TUBG1 or TUBG2. TUBGCP2, TUBGCP3, TUBGCP4, TUBGCP5 and TUBGCP6 assemble in a 5:5:2:1:1 stoichiometry; each is associated with a gamma-tubulin, thereby arranging 14 gamma-tubulins in a helical manner. Gamma-tubulin at the first position is blocked by TUBGCP3 at the last position, allowing 13 protafilaments to grow into a microtubule. The gTuRC (via TUBGCP3 and TUBGCP6) interacts with ACTB and MZT1; the interactions form a luminal bridge that stabilizes the initial structure during complex assembly. The gTuRC (via TUBGCP2) interacts with MZT2A/MZT2B and CDK5RAP2 (via CM1 motif); the interactions play a role in gTuRC activation. Interacts with NINL. Interacts with ATF5; the ATF5:PCNT:polyglutamylated tubulin (PGT) tripartite unites the mother centriole and the pericentriolar material (PCM) in the centrosome.

The protein localises to the cytoplasm. Its subcellular location is the cytoskeleton. It localises to the microtubule organizing center. The protein resides in the centrosome. Functionally, component of the gamma-tubulin ring complex (gTuRC) which mediates microtubule nucleation. The gTuRC regulates the minus-end nucleation of alpha-beta tubulin heterodimers that grow into microtubule protafilaments, a critical step in centrosome duplication and spindle formation. The polypeptide is Gamma-tubulin complex component 4 (Tubgcp4) (Mus musculus (Mouse)).